The chain runs to 451 residues: Tubulin gamma-2 chain (451 aa).

The residue at position 131 (Ser-131) is a Phosphoserine; by BRSK1. 142–148 contacts GTP; sequence AGGTGSG.

Belongs to the tubulin family. As to quaternary structure, component of the gamma-tubulin ring complex (gTuRC) consisting of TUBGCP2, TUBGCP3, TUBGCP4, TUBGCP5 and TUBGCP6 and gamma-tubulin TUBG1 or TUBG2. TUBGCP2, TUBGCP3, TUBGCP4, TUBGCP5 and TUBGCP6 assemble in a 5:5:2:1:1 stoichiometry; each is associated with a gamma-tubulin, thereby arranging 14 gamma-tubulins in a helical manner. Gamma-tubulin at the first position is blocked by TUBGCP3 at the last position, allowing 13 protafilaments to grow into a microtubule. Interacts with alpha-beta tubulin heterodimers; the interaction allows microtubules to nucleate from the gTuRC. Phosphorylation at Ser-131 by BRSK1 regulates centrosome duplication, possibly by mediating relocation of gamma-tubulin and its associated proteins from the cytoplasm to the centrosome.

Its subcellular location is the cytoplasm. The protein resides in the cytoskeleton. It is found in the microtubule organizing center. The protein localises to the centrosome. Functionally, tubulin is the major constituent of microtubules, protein filaments consisting of alpha- and beta-tubulin heterodimers. Gamma-tubulin is a key component of the gamma-tubulin ring complex (gTuRC) which mediates microtubule nucleation. The gTuRC regulates the minus-end nucleation of alpha-beta tubulin heterodimers that grow into microtubule protafilaments, a critical step in centrosome duplication and spindle formation. The sequence is that of Tubulin gamma-2 chain (Tubg2) from Mus musculus (Mouse).